We begin with the raw amino-acid sequence, 108 residues long: Urease subunit beta (108 aa).

This sequence belongs to the urease beta subunit family. As to quaternary structure, heterotrimer of UreA (gamma), UreB (beta) and UreC (alpha) subunits. Three heterotrimers associate to form the active enzyme.

Its subcellular location is the cytoplasm. The enzyme catalyses urea + 2 H2O + H(+) = hydrogencarbonate + 2 NH4(+). Its pathway is nitrogen metabolism; urea degradation; CO(2) and NH(3) from urea (urease route): step 1/1. This chain is Urease subunit beta, found in Microcystis aeruginosa (strain NIES-843 / IAM M-2473).